Reading from the N-terminus, the 379-residue chain is L-lactate dehydrogenase (379 aa).

Residues Met-1–Pro-379 enclose the FMN hydroxy acid dehydrogenase domain. Tyr-24 serves as a coordination point for substrate. The FMN site is built by Ser-106 and Gln-127. Tyr-129 serves as a coordination point for substrate. Thr-155 serves as a coordination point for FMN. Residue Arg-164 participates in substrate binding. Residue Lys-251 participates in FMN binding. His-275 functions as the Proton acceptor in the catalytic mechanism. Arg-278 contacts substrate. Position 306–330 (Asp-306–Arg-330) interacts with FMN.

It belongs to the FMN-dependent alpha-hydroxy acid dehydrogenase family. It depends on FMN as a cofactor.

The protein resides in the cell membrane. It carries out the reaction (S)-lactate + A = pyruvate + AH2. Catalyzes the conversion of L-lactate to pyruvate. Is coupled to the respiratory chain. The chain is L-lactate dehydrogenase from Alcaligenes faecalis.